Here is a 653-residue protein sequence, read N- to C-terminus: Modification methylase StsI (653 aa).

Belongs to the N(4)/N(6)-methyltransferase family. As to quaternary structure, monomer.

The catalysed reaction is a 2'-deoxyadenosine in DNA + S-adenosyl-L-methionine = an N(6)-methyl-2'-deoxyadenosine in DNA + S-adenosyl-L-homocysteine + H(+). Functionally, an alpha subtype methylase that recognizes the double-stranded sequence 5'-GGATG-3' in one strand and 3'-CATCC-5' in the other, methylates A of both strands, and protects the DNA from cleavage by the StsI endonuclease. The 2 domains of the protein participate in modification of the two strands. The polypeptide is Modification methylase StsI (stsIM) (Streptococcus sanguinis).